A 242-amino-acid polypeptide reads, in one-letter code: uncharacterized protein (242 aa).

Disordered regions lie at residues 16 to 121 (GLYK…GAMA) and 152 to 178 (PVRPAKLPKGKGRLRRPRQSRFKTQPV). 2 stretches are compositionally biased toward pro residues: residues 50–64 (PRPPTGPPARYPSPA) and 97–113 (EPRPPPESPGAQPPPGP). The segment covering 157–172 (KLPKGKGRLRRPRQSR) has biased composition (basic residues). The residue at position 175 (Thr175) is a Phosphothreonine. Ser192, Ser206, Ser216, Ser232, and Ser238 each carry phosphoserine. Residues 215–242 (QSLSLQREPLGSCKLRNSLDSSDSDSAL) form a disordered region. Positions 232–242 (SLDSSDSDSAL) are enriched in low complexity.

Its subcellular location is the cytoplasm. This is an uncharacterized protein from Rattus norvegicus (Rat).